Consider the following 187-residue polypeptide: Calcium and integrin-binding family member 2 (187 aa).

EF-hand domains lie at 66-101, 103-138, and 144-179; these read RENP…LCES, PREL…LTKS, and EVVL…APDF. Residues Asp116, Asn118, Asp120, Asp127, Asp157, Asp159, Asp161, Lys163, and Asp168 each contribute to the Ca(2+) site.

In terms of assembly, monomer. Homodimer. Interacts with WHRN and MYO7A. Interacts with ITGA2B (via C-terminus cytoplasmic tail region); this interaction is stabilized/increased in a calcium and magnesium-dependent manner. Interacts with ITGA7 (via C-terminus cytoplasmic tail region); this interaction is stabilized/increased in a calcium and magnesium-dependent manner. Interacts with TMC1. Interacts with TMC2. Interacts with PIEZO1. Expressed in inner and outer segments of photoreceptor cells, as well as in the pigmented epithelium. Also observed in the inner and outer plexiform layers and in the ganglion cell layer (at protein level). Expressed in sensory hair cell stereocilia, with expression mainly at the basal body of the kinocilium and in the hair bundle stereocilia; and the apical surface of hair cells (at protein level). Located in the tip region of the stereocilia and at the apical surface of hair cells around the cuticular plate (at protein level). Not expressed in the hair bundles of the vestibular hair cells. Strongly expressed in skeletal muscles, brain, kidney and liver. Expressed in the skeletal muscle, retina and cochlea. Expressed in megakaryocytes and endothelial cells. Expressed in heart, spleen, lung, and inner ear. In the inner ear, expressed in the vestibule, basilar membrane and spiral ganglion cells. Expressed in the supporting cells in both the organ of Corti and the vestibular sensory epithelia.

Its subcellular location is the cytoplasm. It is found in the cell projection. It localises to the stereocilium. The protein resides in the photoreceptor inner segment. The protein localises to the cilium. Its subcellular location is the photoreceptor outer segment. It is found in the cell membrane. It localises to the sarcolemma. Calcium- and integrin-binding protein that plays a role in intracellular calcium homeostasis. Acts as an auxiliary subunit of the sensory mechanoelectrical transduction (MET) channel in hair cells. Essential for mechanoelectrical transduction (MET) currents in auditory hair cells and thereby required for hearing. Regulates the function of hair cell mechanotransduction by controlling the distribution of transmembrane channel-like proteins TMC1 and TMC2, and by regulating the function of the MET channels in hair cells. Required for the maintenance of auditory hair cell stereocilia bundle morphology and function and for hair-cell survival in the cochlea. Critical for proper photoreceptor cell maintenance and function. Plays a role in intracellular calcium homeostasis by decreasing ATP-induced calcium release. Seems to be dispensable for vestibular functions. The protein is Calcium and integrin-binding family member 2 (Cib2) of Mus musculus (Mouse).